Here is a 331-residue protein sequence, read N- to C-terminus: Aspartate carbamoyltransferase catalytic subunit (331 aa).

Positions 76 and 77 each coordinate carbamoyl phosphate. K104 is an L-aspartate binding site. Carbamoyl phosphate is bound by residues R126, H154, and Q157. L-aspartate-binding residues include R187 and R246. Positions 287 and 288 each coordinate carbamoyl phosphate.

It belongs to the aspartate/ornithine carbamoyltransferase superfamily. ATCase family. In terms of assembly, heterododecamer (2C3:3R2) of six catalytic PyrB chains organized as two trimers (C3), and six regulatory PyrI chains organized as three dimers (R2).

The enzyme catalyses carbamoyl phosphate + L-aspartate = N-carbamoyl-L-aspartate + phosphate + H(+). Its pathway is pyrimidine metabolism; UMP biosynthesis via de novo pathway; (S)-dihydroorotate from bicarbonate: step 2/3. Its function is as follows. Catalyzes the condensation of carbamoyl phosphate and aspartate to form carbamoyl aspartate and inorganic phosphate, the committed step in the de novo pyrimidine nucleotide biosynthesis pathway. The protein is Aspartate carbamoyltransferase catalytic subunit of Dehalococcoides mccartyi (strain ATCC BAA-2100 / JCM 16839 / KCTC 5957 / BAV1).